The sequence spans 211 residues: uncharacterized protein (211 aa).

Topologically, residues 1 to 33 (MQNGTEDKSNIPARSNDDVLPPLAVRLTMKVMR) are cytoplasmic. A helical membrane pass occupies residues 34–54 (LIFIGKMFAYSFVPFPPFKLL). At 55–58 (TFDN) the chain is on the lumenal side. A helical membrane pass occupies residues 59–79 (TVGWFVAYSAIVSIWGFAVWM). Residues 80–116 (ERGYRHKINLLPPRCTKIRCSRCNTRIRSPNWFKYKN) lie on the Cytoplasmic side of the membrane. The chain crosses the membrane as a helical span at residues 117–137 (WLYFFLLYVSLTTSNLIIQLA). Residues 138–162 (SFMTEMSRRGISVPGTKDPGKRDYL) lie on the Lumenal side of the membrane. A helical membrane pass occupies residues 163–183 (GLIIPMRFIGAFIHYMTANLF). The Cytoplasmic segment spans residues 184-211 (KEYYLHNGPLEKNDRPSTDEKTSENETL).

The protein resides in the endoplasmic reticulum membrane. This is an uncharacterized protein from Saccharomyces cerevisiae (strain ATCC 204508 / S288c) (Baker's yeast).